The primary structure comprises 625 residues: MAU2 chromatid cohesion factor homolog (625 aa).

TPR repeat units lie at residues 96–129 (FDTASLLAQLHLKTEQSSHAKAMLRRAVELSQNN), 451–484 (GGFYYVQGLHAFHKNSFHEAKRFLRETLKMANAE), and 491–524 (SCSLVLLSHVFLSIGNSKESMNMVTPAMQLASKI). A compositionally biased stretch (polar residues) spans 600–611 (TVPTTETSTSAL). The disordered stretch occupies residues 600-625 (TVPTTETSTSALQQPQQPAAQFGQFY). Over residues 612–625 (QQPQQPAAQFGQFY) the composition is skewed to low complexity.

Belongs to the SCC4/mau-2 family. As to quaternary structure, interacts with Nipped-B to form the cohesin loading complex.

The protein resides in the nucleus. The protein localises to the nucleoplasm. Its function is as follows. Required for association of the cohesin complex with chromatin during interphase. Plays a role in sister chromatid cohesion and normal progression through prometaphase. In Drosophila mojavensis (Fruit fly), this protein is MAU2 chromatid cohesion factor homolog.